A 483-amino-acid chain; its full sequence is ATP synthase subunit beta (483 aa).

162–169 (GGAGVGKT) serves as a coordination point for ATP.

It belongs to the ATPase alpha/beta chains family. As to quaternary structure, F-type ATPases have 2 components, CF(1) - the catalytic core - and CF(0) - the membrane proton channel. CF(1) has five subunits: alpha(3), beta(3), gamma(1), delta(1), epsilon(1). CF(0) has four main subunits: a(1), b(1), b'(1) and c(9-12).

The protein resides in the cellular thylakoid membrane. It catalyses the reaction ATP + H2O + 4 H(+)(in) = ADP + phosphate + 5 H(+)(out). Its function is as follows. Produces ATP from ADP in the presence of a proton gradient across the membrane. The catalytic sites are hosted primarily by the beta subunits. The polypeptide is ATP synthase subunit beta (Prochloron didemni).